Reading from the N-terminus, the 514-residue chain is Serine--tRNA ligase, cytoplasmic (514 aa).

Met-1 carries the post-translational modification N-acetylmethionine. The segment at Arg-9–Ser-61 is interaction with tRNA. Ser-241 bears the Phosphoserine mark. 2 residues coordinate L-serine: Thr-271 and Arg-302. Residues Arg-302–Glu-304 and Val-318–Phe-321 each bind ATP. N6-acetyllysine is present on Lys-323. Glu-325 contributes to the L-serine binding site. Position 391 to 394 (Glu-391 to Ser-394) interacts with ATP. Asn-427 contacts L-serine. Residues Pro-473 to Ala-514 form a disordered region. Over residues Glu-479–Leu-502 the composition is skewed to basic and acidic residues. Positions Lys-482–Lys-494 match the Nuclear localization signal motif. A compositionally biased stretch (polar residues) spans Asn-504 to Ala-514.

Belongs to the class-II aminoacyl-tRNA synthetase family. Type-1 seryl-tRNA synthetase subfamily. In terms of assembly, homodimer. The tRNA molecule may bind across the dimer. Interacts with SIRT2. Interacts with METTL6; interaction is required for the tRNA N(3)-methylcytidine methyltransferase activity of METTL6. As to expression, brain.

The protein resides in the cytoplasm. The protein localises to the nucleus. The enzyme catalyses tRNA(Ser) + L-serine + ATP = L-seryl-tRNA(Ser) + AMP + diphosphate + H(+). It catalyses the reaction tRNA(Sec) + L-serine + ATP = L-seryl-tRNA(Sec) + AMP + diphosphate + H(+). The protein operates within aminoacyl-tRNA biosynthesis; selenocysteinyl-tRNA(Sec) biosynthesis; L-seryl-tRNA(Sec) from L-serine and tRNA(Sec): step 1/1. Functionally, catalyzes the attachment of serine to tRNA(Ser) in a two-step reaction: serine is first activated by ATP to form Ser-AMP and then transferred to the acceptor end of tRNA(Ser). Is probably also able to aminoacylate tRNA(Sec) with serine, to form the misacylated tRNA L-seryl-tRNA(Sec), which will be further converted into selenocysteinyl-tRNA(Sec). In the nucleus, binds to the VEGFA core promoter and prevents MYC binding and transcriptional activation by MYC. Recruits SIRT2 to the VEGFA promoter, promoting deacetylation of histone H4 at 'Lys-16' (H4K16). Thereby, inhibits the production of VEGFA and sprouting angiogenesis mediated by VEGFA. The polypeptide is Serine--tRNA ligase, cytoplasmic (Homo sapiens (Human)).